A 423-amino-acid polypeptide reads, in one-letter code: Phospholipase A1-IIalpha (423 aa).

A coiled-coil region spans residues 194–217 (SAQEQVQGELKRLLELYKDEEISI). The active-site Acyl-ester intermediate is serine 223. Residues serine 223, aspartate 290, and histidine 327 each act as charge relay system in the active site. A disordered region spans residues 399–423 (HDDDVDADDNDDSSTSNQLQELNTD). Residues 401–410 (DDVDADDNDD) are compositionally biased toward acidic residues. Polar residues predominate over residues 411–423 (SSTSNQLQELNTD).

This sequence belongs to the AB hydrolase superfamily. Lipase family.

Its subcellular location is the cytoplasm. In terms of biological role, acylhydrolase that catalyzes the hydrolysis of phospholipids at the sn-1 position. The protein is Phospholipase A1-IIalpha of Arabidopsis thaliana (Mouse-ear cress).